The sequence spans 320 residues: MSRSALIENVTAMLADAGFSVSDRCATRPKSFDVAARRGSDVVLMKVLVNIDAFDAETGAEMRRLGTYLHATPLVVGLRTRDEDLDPGVVYFRHGVPVFNPDTAMELFVDGIPPLVYAAPGGLYVNIDGDVLADRREDERLSLGQLASELGVSRRTVSKYEDGMNASIEVAMRLEDLFGGELTAPVDVMDGAEDVRDTDPTPDDPEAAPEDVPVLSVLARVGFEVHPTVQAPFKAVGEAGAGHDRLLTGHSAFTEAAVKRARIMSSVGEVTHTRAVYVVDEAGRESVDDTAIVEREELANVDDSEDLRDLLADRGDLQEA.

The region spanning 132-189 (LADRREDERLSLGQLASELGVSRRTVSKYEDGMNASIEVAMRLEDLFGGELTAPVDVM) is the HTH cro/C1-type domain. The H-T-H motif DNA-binding region spans 143–162 (LGQLASELGVSRRTVSKYED).

The sequence is that of Putative HTH-type transcriptional regulatory protein VNG_2112C from Halobacterium salinarum (strain ATCC 700922 / JCM 11081 / NRC-1) (Halobacterium halobium).